We begin with the raw amino-acid sequence, 399 residues long: Tyrosine--tRNA ligase 2 (399 aa).

The 'HIGH' region motif lies at 41–50 (PTAPDLHLGH). Residues 225 to 229 (KMSKS) carry the 'KMSKS' region motif. Lys-228 serves as a coordination point for ATP. In terms of domain architecture, S4 RNA-binding spans 336 to 398 (ILIANLLKEA…GKRKFANITV (63 aa)).

The protein belongs to the class-I aminoacyl-tRNA synthetase family. TyrS type 2 subfamily. Homodimer.

The protein resides in the cytoplasm. The enzyme catalyses tRNA(Tyr) + L-tyrosine + ATP = L-tyrosyl-tRNA(Tyr) + AMP + diphosphate + H(+). Functionally, catalyzes the attachment of tyrosine to tRNA(Tyr) in a two-step reaction: tyrosine is first activated by ATP to form Tyr-AMP and then transferred to the acceptor end of tRNA(Tyr). This chain is Tyrosine--tRNA ligase 2, found in Pseudoalteromonas translucida (strain TAC 125).